A 257-amino-acid polypeptide reads, in one-letter code: Large ribosomal subunit protein uL2 (257 aa).

A disordered region spans residues Val-207 to Pro-230.

The protein belongs to the universal ribosomal protein uL2 family. Component of the large ribosomal subunit.

Its subcellular location is the cytoplasm. Its function is as follows. Component of the large ribosomal subunit. The ribosome is a large ribonucleoprotein complex responsible for the synthesis of proteins in the cell. In Danio rerio (Zebrafish), this protein is Large ribosomal subunit protein uL2 (rpl8).